The primary structure comprises 363 residues: Putative replication factor C small subunit L510 (363 aa).

47–54 (GPPGTGKT) is an ATP binding site.

Belongs to the activator 1 small subunits family. RfcS subfamily.

Functionally, part of the RFC clamp loader complex which loads the PCNA sliding clamp onto DNA. The polypeptide is Putative replication factor C small subunit L510 (Acanthamoeba polyphaga mimivirus (APMV)).